Reading from the N-terminus, the 170-residue chain is Acetyl-CoA decarbonylase/synthase complex subunit epsilon 2 (170 aa).

Belongs to the CdhB family. Heterotetramer of two alpha and two epsilon subunits. The ACDS complex is made up of alpha, epsilon, beta, gamma and delta subunits with a probable stoichiometry of (alpha(2)epsilon(2))(4)-beta(8)-(gamma(1)delta(1))(8).

It participates in one-carbon metabolism; methanogenesis from acetate. Its function is as follows. Part of a complex that catalyzes the reversible cleavage of acetyl-CoA, allowing growth on acetate as sole source of carbon and energy. The alpha-epsilon subcomponent functions as a carbon monoxide dehydrogenase. The precise role of the epsilon subunit is unclear; it may have a stabilizing role within the alpha(2)epsilon(2) component and/or be involved in electron transfer to FAD during a potential FAD-mediated CO oxidation. This Methanosarcina acetivorans (strain ATCC 35395 / DSM 2834 / JCM 12185 / C2A) protein is Acetyl-CoA decarbonylase/synthase complex subunit epsilon 2 (cdhB2).